Here is a 156-residue protein sequence, read N- to C-terminus: Phosphopantetheine adenylyltransferase (156 aa).

Residue Thr-9 participates in substrate binding. Residues 9 to 10 and His-17 contribute to the ATP site; that span reads TF. Residues Lys-41, Leu-73, and Arg-87 each contribute to the substrate site. ATP-binding positions include 88–90, Glu-98, and 123–129; these read GVR and WVFVSST.

It belongs to the bacterial CoaD family. In terms of assembly, homohexamer. Mg(2+) serves as cofactor.

It localises to the cytoplasm. It carries out the reaction (R)-4'-phosphopantetheine + ATP + H(+) = 3'-dephospho-CoA + diphosphate. It functions in the pathway cofactor biosynthesis; coenzyme A biosynthesis; CoA from (R)-pantothenate: step 4/5. Functionally, reversibly transfers an adenylyl group from ATP to 4'-phosphopantetheine, yielding dephospho-CoA (dPCoA) and pyrophosphate. In Haemophilus influenzae (strain PittEE), this protein is Phosphopantetheine adenylyltransferase.